Here is a 430-residue protein sequence, read N- to C-terminus: Serine--tRNA ligase (430 aa).

231 to 233 (TSE) lines the L-serine pocket. ATP is bound at residue 262-264 (RSE). Glu-285 lines the L-serine pocket. 349 to 352 (EISS) contributes to the ATP binding site. Ser-385 is an L-serine binding site.

This sequence belongs to the class-II aminoacyl-tRNA synthetase family. Type-1 seryl-tRNA synthetase subfamily. As to quaternary structure, homodimer. The tRNA molecule binds across the dimer.

It localises to the cytoplasm. The catalysed reaction is tRNA(Ser) + L-serine + ATP = L-seryl-tRNA(Ser) + AMP + diphosphate + H(+). It carries out the reaction tRNA(Sec) + L-serine + ATP = L-seryl-tRNA(Sec) + AMP + diphosphate + H(+). It participates in aminoacyl-tRNA biosynthesis; selenocysteinyl-tRNA(Sec) biosynthesis; L-seryl-tRNA(Sec) from L-serine and tRNA(Sec): step 1/1. Functionally, catalyzes the attachment of serine to tRNA(Ser). Is also able to aminoacylate tRNA(Sec) with serine, to form the misacylated tRNA L-seryl-tRNA(Sec), which will be further converted into selenocysteinyl-tRNA(Sec). The protein is Serine--tRNA ligase of Ruegeria pomeroyi (strain ATCC 700808 / DSM 15171 / DSS-3) (Silicibacter pomeroyi).